Consider the following 123-residue polypeptide: Small ribosomal subunit protein uS12 (123 aa).

The segment at 1–23 (MPTISQLVKKGREKVEKKTKSPA) is disordered. At Asp89 the chain carries 3-methylthioaspartic acid.

This sequence belongs to the universal ribosomal protein uS12 family. Part of the 30S ribosomal subunit. Contacts proteins S8 and S17. May interact with IF1 in the 30S initiation complex.

With S4 and S5 plays an important role in translational accuracy. Functionally, interacts with and stabilizes bases of the 16S rRNA that are involved in tRNA selection in the A site and with the mRNA backbone. Located at the interface of the 30S and 50S subunits, it traverses the body of the 30S subunit contacting proteins on the other side and probably holding the rRNA structure together. The combined cluster of proteins S8, S12 and S17 appears to hold together the shoulder and platform of the 30S subunit. The polypeptide is Small ribosomal subunit protein uS12 (Thermodesulfovibrio yellowstonii (strain ATCC 51303 / DSM 11347 / YP87)).